The sequence spans 516 residues: Membrane-bound transcription factor site-2 protease (516 aa).

Topologically, residues 1–3 (MIP) are cytoplasmic. A helical membrane pass occupies residues 4–24 (VSLVVVVVGGWTAVYLTDLVL). Topologically, residues 25–74 (KSSVYFKHSYEDWLENNGLSISPFHIRWQTAVFNRAFYSWGRRKARMLYQ) are lumenal. 2 helical membrane-spanning segments follow: residues 75 to 95 (WFNFGMVFGVIAMFSSFFLLG) and 96 to 107 (KTLIQTLGQMMA). The Lumenal portion of the chain corresponds to 108 to 141 (DSSYSSSSSSSSHSSSSSSSSSSSSSLYNEQVLQ). Residues 142-166 (VVVPGINLPVNQLTYFFAAVLISGV) traverse the membrane as a helical segment. Zn(2+) is bound at residue His-168. The active site involves Glu-169. 3 helical membrane passes run 171–183 (GHGIAAIREQVRF), 184–206 (NGFGIFLFIIYPGAFVDLFTTHL), and 226–248 (FILALLGILALILLPVILLPFYY). His-172 contributes to the Zn(2+) binding site. At 249-443 (TGVGVLITEV…LPVVVETFVK (195 aa)) the chain is on the lumenal side. N-linked (GlcNAc...) asparagine glycosylation occurs at Asn-334. The next 2 helical transmembrane spans lie at 444 to 461 (YLISLSGALAIVNAVPCF) and 462 to 473 (ALDGQWILNSFL). At 474–489 (DATLTSVIGDNDVKDL) the chain is on the lumenal side. A helical membrane pass occupies residues 490–510 (IGFFILLGGSILLAANVALGL). The Cytoplasmic portion of the chain corresponds to 511–516 (WMVTAR).

It belongs to the peptidase M50A family. It depends on Zn(2+) as a cofactor.

It is found in the membrane. It localises to the cytoplasm. Its subcellular location is the golgi apparatus membrane. The catalysed reaction is Cleaves several transcription factors that are type-2 transmembrane proteins within membrane-spanning domains. Known substrates include sterol regulatory element-binding protein (SREBP) -1, SREBP-2 and forms of the transcriptional activator ATF6. SREBP-2 is cleaved at the site 477-DRSRILL-|-CVLTFLCLSFNPLTSLLQWGGA-505. The residues Asn-Pro, 11 residues distal to the site of cleavage in the membrane-spanning domain, are important for cleavage by S2P endopeptidase. Replacement of either of these residues does not prevent cleavage, but there is no cleavage if both of these residues are replaced.. In terms of biological role, zinc metalloprotease that mediates intramembrane proteolysis of proteins such as ATF6, ATF6B, SREBF1/SREBP1 and SREBF2/SREBP2. Catalyzes the second step in the proteolytic activation of the sterol regulatory element-binding proteins (SREBPs) SREBF1/SREBP1 and SREBF2/SREBP2: cleaves SREBPs within the first transmembrane segment, thereby releasing the N-terminal segment with a portion of the transmembrane segment attached. Mature N-terminal SREBP fragments shuttle to the nucleus and activate gene transcription. Also mediates the second step in the proteolytic activation of the cyclic AMP-dependent transcription factor ATF-6 (ATF6 and ATF6B). Involved in intramembrane proteolysis during bone formation. In astrocytes and osteoblasts, upon DNA damage and ER stress, mediates the second step of the regulated intramembrane proteolytic activation of the transcription factor CREB3L1, leading to the inhibition of cell-cycle progression. The polypeptide is Membrane-bound transcription factor site-2 protease (Bos taurus (Bovine)).